The following is a 121-amino-acid chain: Small ribosomal subunit protein uS13 (121 aa).

Residues Gly94–Lys121 are disordered. Positions Ser106–Lys121 are enriched in basic residues.

Belongs to the universal ribosomal protein uS13 family. As to quaternary structure, part of the 30S ribosomal subunit. Forms a loose heterodimer with protein S19. Forms two bridges to the 50S subunit in the 70S ribosome.

Located at the top of the head of the 30S subunit, it contacts several helices of the 16S rRNA. In the 70S ribosome it contacts the 23S rRNA (bridge B1a) and protein L5 of the 50S subunit (bridge B1b), connecting the 2 subunits; these bridges are implicated in subunit movement. Contacts the tRNAs in the A and P-sites. The protein is Small ribosomal subunit protein uS13 of Exiguobacterium sibiricum (strain DSM 17290 / CCUG 55495 / CIP 109462 / JCM 13490 / 255-15).